The sequence spans 235 residues: Motile sperm domain-containing protein 3 (235 aa).

Disordered stretches follow at residues M1 to P25 and E143 to H171. The MSP domain occupies P33–Q145. The span at D149 to T164 shows a compositional bias: pro residues. The next 2 membrane-spanning stretches (helical) occupy residues S180–P200 and V213–L233.

The protein resides in the membrane. In Homo sapiens (Human), this protein is Motile sperm domain-containing protein 3 (MOSPD3).